We begin with the raw amino-acid sequence, 545 residues long: MTRLVLCPGSRSGPLAAAAGLLAARGDLALTTAIDERSAAFLALGMATAGGRAVAVVTTSGTAVANLLPAAVEADRSTQPLLLLTADRPARLKNCGANQTVNQEQFLQPVCRWLGHGAPEGLASQPPQALFDLAHEAWRHCHGRPPGPVQLNLPFEEPLHGAPEDQLSLQVSGLQRSAPAPSSDSPLGAAPQLDPNQAGVVVAGPWRGLAPALPAYQQALLQWLARSGWPLLADPLAAIPADCPGQLDGWELQLDRLQLAPGSPVLRLGPLPASRRLEAWLQRQTGPQLLISEGEPRGLDPLGLADQWSGGLAAWWAEQNQDFPGASTPEQLMPQSGIASLLRQRLPLQGAVNEPALAHWLPLLLPPQLPVMLAASSPVRDWLIWGGLQAQNRRCFSFRGASGIDGTLSLAMGLAMEQGPMVLVTGDLALLHDSNGWLHGAQGNPPLLVLLIDNQGGGIFQQLPIQSKQFDRLFAMPQRVNPLALAAAHGIDGRQVACLEDLPEALEWGLAQGRPALLRLATDREADARLRTQLRSAAQNAEPLL.

The span at 170-185 shows a compositional bias: polar residues; that stretch reads QVSGLQRSAPAPSSDS. Positions 170–193 are disordered; that stretch reads QVSGLQRSAPAPSSDSPLGAAPQL.

This sequence belongs to the TPP enzyme family. MenD subfamily. Homodimer. Mg(2+) is required as a cofactor. Requires Mn(2+) as cofactor. Thiamine diphosphate serves as cofactor.

The enzyme catalyses isochorismate + 2-oxoglutarate + H(+) = 5-enolpyruvoyl-6-hydroxy-2-succinyl-cyclohex-3-ene-1-carboxylate + CO2. Its pathway is quinol/quinone metabolism; 1,4-dihydroxy-2-naphthoate biosynthesis; 1,4-dihydroxy-2-naphthoate from chorismate: step 2/7. It participates in cofactor biosynthesis; phylloquinone biosynthesis. Functionally, catalyzes the thiamine diphosphate-dependent decarboxylation of 2-oxoglutarate and the subsequent addition of the resulting succinic semialdehyde-thiamine pyrophosphate anion to isochorismate to yield 2-succinyl-5-enolpyruvyl-6-hydroxy-3-cyclohexene-1-carboxylate (SEPHCHC). The sequence is that of 2-succinyl-5-enolpyruvyl-6-hydroxy-3-cyclohexene-1-carboxylate synthase from Parasynechococcus marenigrum (strain WH8102).